The chain runs to 476 residues: Probable serine carboxypeptidase CPVL (476 aa).

Residues 1 to 22 (MVGTMWKVIVSLVLLMPGSCDG) form the signal peptide. Asn-81 and Asn-132 each carry an N-linked (GlcNAc...) asparagine glycan. The active site involves Ser-204. 2 N-linked (GlcNAc...) asparagine glycosylation sites follow: Asn-307 and Asn-346. Active-site residues include Asp-388 and His-448.

This sequence belongs to the peptidase S10 family.

Functionally, may be involved in the digestion of phagocytosed particles in the lysosome, participation in an inflammatory protease cascade, and trimming of peptides for antigen presentation. This chain is Probable serine carboxypeptidase CPVL (CPVL), found in Pongo abelii (Sumatran orangutan).